We begin with the raw amino-acid sequence, 269 residues long: Eukaryotic translation initiation factor 3 subunit G (269 aa).

Positions 140 to 181 (AIGGGDMSAQGGSGSGRYVPPSLRAGARDPSSNAYQDQRERD) are disordered. Residues 141–154 (IGGGDMSAQGGSGS) show a composition bias toward gly residues. The residue at position 161 (S161) is a Phosphoserine. Residues 184–263 (KTIRLTQVNE…FMLHAEWSKP (80 aa)) enclose the RRM domain.

The protein belongs to the eIF-3 subunit G family. Component of the eukaryotic translation initiation factor 3 (eIF-3) complex.

The protein localises to the cytoplasm. Functionally, RNA-binding component of the eukaryotic translation initiation factor 3 (eIF-3) complex, which is involved in protein synthesis of a specialized repertoire of mRNAs and, together with other initiation factors, stimulates binding of mRNA and methionyl-tRNAi to the 40S ribosome. The eIF-3 complex specifically targets and initiates translation of a subset of mRNAs involved in cell proliferation. This subunit can bind 18S rRNA. This Kluyveromyces lactis (strain ATCC 8585 / CBS 2359 / DSM 70799 / NBRC 1267 / NRRL Y-1140 / WM37) (Yeast) protein is Eukaryotic translation initiation factor 3 subunit G.